We begin with the raw amino-acid sequence, 539 residues long: Phosphoenolpyruvate carboxykinase (ATP) (539 aa).

Residues R64, Y206, and K212 each contribute to the substrate site. ATP is bound by residues K212, H231, and 247-255; that span reads GLSGTGKTT. Mn(2+) is bound by residues K212 and H231. D268 is a Mn(2+) binding site. ATP is bound by residues E296, R332, 448 to 449, and T454; that span reads RI. R332 provides a ligand contact to substrate.

It belongs to the phosphoenolpyruvate carboxykinase (ATP) family. In terms of assembly, monomer. It depends on Mn(2+) as a cofactor.

The protein resides in the cytoplasm. The enzyme catalyses oxaloacetate + ATP = phosphoenolpyruvate + ADP + CO2. It functions in the pathway carbohydrate biosynthesis; gluconeogenesis. Functionally, involved in the gluconeogenesis. Catalyzes the conversion of oxaloacetate (OAA) to phosphoenolpyruvate (PEP) through direct phosphoryl transfer between the nucleoside triphosphate and OAA. The chain is Phosphoenolpyruvate carboxykinase (ATP) from Yersinia pseudotuberculosis serotype O:1b (strain IP 31758).